Here is a 118-residue protein sequence, read N- to C-terminus: MPRVKGGTVTRARRKKTIKLAKGYFGSKRTLYKVAKQQVMKSGQYAFRDRRQRKRDFRKLWITRINAAARQHDMSYSRLMNGLKKAEIDINRKMLSEIAISDEKAFGELVAKAKDALK.

It belongs to the bacterial ribosomal protein bL20 family.

Functionally, binds directly to 23S ribosomal RNA and is necessary for the in vitro assembly process of the 50S ribosomal subunit. It is not involved in the protein synthesizing functions of that subunit. The protein is Large ribosomal subunit protein bL20 of Staphylococcus saprophyticus subsp. saprophyticus (strain ATCC 15305 / DSM 20229 / NCIMB 8711 / NCTC 7292 / S-41).